We begin with the raw amino-acid sequence, 887 residues long: Alanine--tRNA ligase (887 aa).

His-581, His-585, Cys-683, and His-687 together coordinate Zn(2+).

The protein belongs to the class-II aminoacyl-tRNA synthetase family. Zn(2+) is required as a cofactor.

It localises to the cytoplasm. The enzyme catalyses tRNA(Ala) + L-alanine + ATP = L-alanyl-tRNA(Ala) + AMP + diphosphate. In terms of biological role, catalyzes the attachment of alanine to tRNA(Ala) in a two-step reaction: alanine is first activated by ATP to form Ala-AMP and then transferred to the acceptor end of tRNA(Ala). Also edits incorrectly charged Ser-tRNA(Ala) and Gly-tRNA(Ala) via its editing domain. The chain is Alanine--tRNA ligase from Ehrlichia ruminantium (strain Gardel).